The chain runs to 173 residues: Large ribosomal subunit protein bL17 (173 aa).

Residues Ala136–Glu173 are disordered. The span at Glu138–Glu149 shows a compositional bias: acidic residues. Positions Ala150–Pro166 are enriched in low complexity.

This sequence belongs to the bacterial ribosomal protein bL17 family. In terms of assembly, part of the 50S ribosomal subunit. Contacts protein L32.

The protein is Large ribosomal subunit protein bL17 of Bifidobacterium longum subsp. infantis (strain ATCC 15697 / DSM 20088 / JCM 1222 / NCTC 11817 / S12).